A 320-amino-acid chain; its full sequence is Uroplakin-3b (320 aa).

Positions 1–29 (MGLPWGQPHLGLQMLLLALNCLRPSLSLG) are cleaved as a signal peptide. The Lumenal segment spans residues 30–240 (EWGSWMDASS…LHPLFSGRPP (211 aa)). N-linked (GlcNAc...) asparagine glycosylation occurs at Asn133. Residues 241 to 266 (TLGLLGSLYHALLQPVVAGGGPGAAA) traverse the membrane as a helical segment. At 267–320 (DRLLHGQALHDPPHPTQRGRHTAGGLQAWPGPPPQPQPLAWPLCMGLGEMGRWE) the chain is on the cytoplasmic side. The tract at residues 273–303 (QALHDPPHPTQRGRHTAGGLQAWPGPPPQPQ) is disordered.

Belongs to the uroplakin-3 family. As to quaternary structure, heterodimer with uroplakin-1B (UPK1B).

It localises to the cell membrane. Its function is as follows. Component of the asymmetric unit membrane (AUM); a highly specialized biomembrane elaborated by terminally differentiated urothelial cells. May play an important role in AUM-cytoskeleton interaction in terminally differentiated urothelial cells. It also contributes to the formation of urothelial glycocalyx which may play an important role in preventing bacterial adherence. The sequence is that of Uroplakin-3b (UPK3B) from Homo sapiens (Human).